The following is a 473-amino-acid chain: Bifunctional protein HldE (473 aa).

The tract at residues 1 to 318 is ribokinase; that stretch reads MKLTLPRYDQ…RAVQREEGSE (318 aa). 194–197 serves as a coordination point for ATP; sequence NLHE. The active site involves D263. Residues 343–473 form a cytidylyltransferase region; sequence FTNGCFDILH…TAIVEKIRNK (131 aa).

In the N-terminal section; belongs to the carbohydrate kinase PfkB family. This sequence in the C-terminal section; belongs to the cytidylyltransferase family. As to quaternary structure, homodimer.

The catalysed reaction is D-glycero-beta-D-manno-heptose 7-phosphate + ATP = D-glycero-beta-D-manno-heptose 1,7-bisphosphate + ADP + H(+). It catalyses the reaction D-glycero-beta-D-manno-heptose 1-phosphate + ATP + H(+) = ADP-D-glycero-beta-D-manno-heptose + diphosphate. Its pathway is nucleotide-sugar biosynthesis; ADP-L-glycero-beta-D-manno-heptose biosynthesis; ADP-L-glycero-beta-D-manno-heptose from D-glycero-beta-D-manno-heptose 7-phosphate: step 1/4. The protein operates within nucleotide-sugar biosynthesis; ADP-L-glycero-beta-D-manno-heptose biosynthesis; ADP-L-glycero-beta-D-manno-heptose from D-glycero-beta-D-manno-heptose 7-phosphate: step 3/4. Functionally, catalyzes the phosphorylation of D-glycero-D-manno-heptose 7-phosphate at the C-1 position to selectively form D-glycero-beta-D-manno-heptose-1,7-bisphosphate. In terms of biological role, catalyzes the ADP transfer from ATP to D-glycero-beta-D-manno-heptose 1-phosphate, yielding ADP-D-glycero-beta-D-manno-heptose. This Ectopseudomonas mendocina (strain ymp) (Pseudomonas mendocina) protein is Bifunctional protein HldE.